A 444-amino-acid chain; its full sequence is Adenine permease AdeQ (444 aa).

Topologically, residues 1 to 29 (MNNDNTDYVSNESGTLSRLFKLPQHGTTV) are cytoplasmic. The helical transmembrane segment at 30-53 (RTELIAGMTTFLTMVYIVFVNPQI) threads the bilayer. Over 54–63 (LGAAQMDPKV) the chain is Periplasmic. A helical transmembrane segment spans residues 64-82 (VFVTTCLIAGIGSIAMGIF). Over 83 to 84 (AN) the chain is Cytoplasmic. A discontinuously helical membrane pass occupies residues 85–101 (LPVALAPAMGLNAFFAF). Residues 102-113 (VVVGAMGISWQT) lie on the Periplasmic side of the membrane. The chain crosses the membrane as a helical span at residues 114 to 133 (GMGAIFWGAVGLFLLTLFRI). At 134–145 (RYWMISNIPLSL) the chain is on the cytoplasmic side. The chain crosses the membrane as a helical span at residues 146 to 166 (RIGITSGIGLFIALMGLKNTG). Topologically, residues 167–182 (VIVANKDTLVMIGDLS) are periplasmic. A helical transmembrane segment spans residues 183–200 (SHGVLLGILGFFIITVLS). Residues 201-204 (SRHF) are Cytoplasmic-facing. The helical transmembrane segment at 205–223 (HAAVLVSIVVTSCCGLFFG) threads the bilayer. Topologically, residues 224–251 (DVHFSGVYSIPPDISGVIGEVDLSGALT) are periplasmic. A helical membrane pass occupies residues 252-280 (LELAGIIFSFMLINLFDSSGTLIGVTDKA). Residues 281–293 (GLIDGNGKFPNMN) are Cytoplasmic-facing. The helical transmembrane segment at 294–309 (KALYVDSVSSVAGAFI) threads the bilayer. The Periplasmic portion of the chain corresponds to 310-311 (GT). Residues 312-327 (SSVTAYIESTSGVAVG) form a discontinuously helical membrane-spanning segment. Over 328-331 (GRTG) the chain is Cytoplasmic. A helical transmembrane segment spans residues 332 to 346 (LTAVVVGVMFLLVMF). At 347-357 (FSPLVAIVPPY) the chain is on the periplasmic side. A helical transmembrane segment spans residues 358–377 (ATAGALIFVGVLMTSSLARV). Residues 378–382 (NWDDF) are Cytoplasmic-facing. Positions 383-418 (TESVPAFITTVMMPFTFSITEGIALGFMSYCIMKVC) form an intramembrane region, discontinuously helical. The Cytoplasmic segment spans residues 419-444 (TGRWRDLNLCVVVVAALFALKIILVD).

The protein belongs to the nucleobase:cation symporter-2 (NCS2) (TC 2.A.40) family. Azg-like subfamily.

It is found in the cell inner membrane. High-affinity transporter for adenine. This Escherichia coli (strain K12) protein is Adenine permease AdeQ (adeQ).